A 60-amino-acid chain; its full sequence is UPF0434 protein YcaR (60 aa).

This sequence belongs to the UPF0434 family.

This is UPF0434 protein YcaR from Escherichia coli O139:H28 (strain E24377A / ETEC).